An 89-amino-acid chain; its full sequence is Small ribosomal subunit protein uS14 (89 aa).

It belongs to the universal ribosomal protein uS14 family. In terms of assembly, part of the 30S ribosomal subunit. Contacts proteins S3 and S10.

Its function is as follows. Binds 16S rRNA, required for the assembly of 30S particles and may also be responsible for determining the conformation of the 16S rRNA at the A site. This Leuconostoc mesenteroides subsp. mesenteroides (strain ATCC 8293 / DSM 20343 / BCRC 11652 / CCM 1803 / JCM 6124 / NCDO 523 / NBRC 100496 / NCIMB 8023 / NCTC 12954 / NRRL B-1118 / 37Y) protein is Small ribosomal subunit protein uS14.